The chain runs to 486 residues: MSNNFKDDFEKNRQSIDTNSHQDHTEDVEKDQSELEHQDTIENTEQQFPPRNAQRRKRRRDLATNHNKQVHNESQTSEDNVQNEAGTIDDRQVESSHSTESQEPSHQDSTPQHEEEYYNKNAFAMDKSHPEPIEDNDKHETIKEAENNTEHSTVSDKSEAEQSQQPKPYFATGANQANTSKDKHDDVTVKQDKDESKDHHSGKKGAAIGAGTAGVAGAAGAMGVSKAKKHSNDAQNKSNSDKSNNSTEDKVSQDKSKDHHNGKKGAAIGAGTAGLAGGAASKSASAASKPHASNNASQNHDEHDNHDRDKERKKGGMAKVLLPLIAAVLIIGALAIFGGMALNNHNNGTKENKIANTNKNNADESKDKDTSKDASKDKSKSTDSDKSKEDQDKATKDESDNDQNNANQANNQAQNNQNQQQANQNQQQQQQRQGGGQRHTVNGQENLYRIAIQYYGSGSPENVEKIRRANGLSGNNIRNGQQIVIP.

The segment covering 1 to 40 (MSNNFKDDFEKNRQSIDTNSHQDHTEDVEKDQSELEHQDT) has biased composition (basic and acidic residues). The interval 1 to 314 (MSNNFKDDFE…NHDRDKERKK (314 aa)) is disordered. Residues 2–204 (SNNFKDDFEK…ESKDHHSGKK (203 aa)) lie on the Extracellular side of the membrane. The segment at 14–34 (QSIDTNSHQDHTEDVEKDQSE) is elastin-binding. The segment covering 64–85 (TNHNKQVHNESQTSEDNVQNEA) has biased composition (polar residues). Basic and acidic residues-rich tracts occupy residues 103–118 (EPSH…EEYY), 126–160 (DKSH…KSEA), and 180–199 (SKDK…SKDH). Composition is skewed to low complexity over residues 204–225 (KGAA…MGVS) and 233–246 (DAQN…SNNS). Residues 205–225 (GAAIGAGTAGVAGAAGAMGVS) traverse the membrane as a helical segment. Residues 226-319 (KAKKHSNDAQ…KERKKGGMAK (94 aa)) are Cytoplasmic-facing. Residues 247–259 (TEDKVSQDKSKDH) show a composition bias toward basic and acidic residues. Residues 278–297 (GAASKSASAASKPHASNNAS) show a composition bias toward low complexity. The segment covering 299 to 314 (NHDEHDNHDRDKERKK) has biased composition (basic and acidic residues). The chain crosses the membrane as a helical span at residues 320–340 (VLLPLIAAVLIIGALAIFGGM). Residues 341 to 486 (ALNNHNNGTK…IRNGQQIVIP (146 aa)) lie on the Extracellular side of the membrane. The interval 351–440 (ENKIANTNKN…QRQGGGQRHT (90 aa)) is disordered. Residues 361–398 (NADESKDKDTSKDASKDKSKSTDSDKSKEDQDKATKDE) are compositionally biased toward basic and acidic residues. A compositionally biased stretch (low complexity) spans 403–431 (QNNANQANNQAQNNQNQQQANQNQQQQQQ). A LysM domain is found at 437–485 (QRHTVNGQENLYRIAIQYYGSGSPENVEKIRRANGLSGNNIRNGQQIVI).

It is found in the cell membrane. In terms of biological role, promotes binding of soluble elastin peptides and tropoelastin to S.aureus cells although it is not able to promote bacterial adherence to immobilized elastin and, therefore, is not a microbial surface component recognizing adhesive matrix molecule (MSCRAMM). This is Elastin-binding protein EbpS (ebpS) from Staphylococcus aureus (strain MSSA476).